The sequence spans 199 residues: NAD(P)H-quinone oxidoreductase chain 6 (199 aa).

5 helical membrane-spanning segments follow: residues 9 to 29 (IVSFAILAAMMIGSAIGVVLL), 32 to 52 (VVYSAFLLGGVFISIAGLYLL), 61 to 81 (AQVLIYVGAVNVLILFAIMLV), 102 to 122 (LVCAGIFALLSAMVLTTPWAI), and 143 to 163 (FLLPFELASILLLMALVGAIV).

Belongs to the complex I subunit 6 family.

It localises to the membrane. The catalysed reaction is a plastoquinone + NADH + (n+1) H(+)(in) = a plastoquinol + NAD(+) + n H(+)(out). The enzyme catalyses a plastoquinone + NADPH + (n+1) H(+)(in) = a plastoquinol + NADP(+) + n H(+)(out). In terms of biological role, NDH-1 shuttles electrons from NAD(P)H, via FMN and iron-sulfur (Fe-S) centers, to quinones in the respiratory chain. The immediate electron acceptor for the enzyme in this species is believed to be plastoquinone. Couples the redox reaction to proton translocation (for every two electrons transferred, four hydrogen ions are translocated across the cytoplasmic membrane), and thus conserves the redox energy in a proton gradient. This chain is NAD(P)H-quinone oxidoreductase chain 6 (ndhG), found in Leptolyngbya boryana (Plectonema boryanum).